The chain runs to 238 residues: Small ribosomal subunit protein uS2 (238 aa).

Belongs to the universal ribosomal protein uS2 family.

This Prochlorococcus marinus (strain SARG / CCMP1375 / SS120) protein is Small ribosomal subunit protein uS2.